The following is a 248-amino-acid chain: UPF0246 protein lp_0089 (248 aa).

Belongs to the UPF0246 family.

In Lactiplantibacillus plantarum (strain ATCC BAA-793 / NCIMB 8826 / WCFS1) (Lactobacillus plantarum), this protein is UPF0246 protein lp_0089.